A 303-amino-acid chain; its full sequence is Protoheme IX farnesyltransferase (303 aa).

9 consecutive transmembrane segments (helical) span residues 25-45 (MGLV…AVVM), 54-74 (IPQI…ACAL), 104-124 (LLLL…LLNI), 125-145 (PSGV…SIWS), 151-171 (WNTV…WVAI), 179-199 (AIAL…ALAI), 227-247 (FIWL…GVVF), 248-268 (VVLA…TFKK), and 280-300 (FIYS…VSLL).

This sequence belongs to the UbiA prenyltransferase family. Protoheme IX farnesyltransferase subfamily. In terms of assembly, interacts with CtaA.

The protein resides in the cell membrane. The enzyme catalyses heme b + (2E,6E)-farnesyl diphosphate + H2O = Fe(II)-heme o + diphosphate. It participates in porphyrin-containing compound metabolism; heme O biosynthesis; heme O from protoheme: step 1/1. Functionally, converts heme B (protoheme IX) to heme O by substitution of the vinyl group on carbon 2 of heme B porphyrin ring with a hydroxyethyl farnesyl side group. The chain is Protoheme IX farnesyltransferase from Staphylococcus aureus (strain Mu3 / ATCC 700698).